Here is a 605-residue protein sequence, read N- to C-terminus: uncharacterized protein (605 aa).

The interval 22–93 (FTEPARFYPS…KQGTAVHGAE (72 aa)) is disordered. Low complexity predominate over residues 46 to 57 (SENASSSVPSHS).

This is an uncharacterized protein from Treponema pallidum (strain Nichols).